Reading from the N-terminus, the 945-residue chain is Isoleucine--tRNA ligase (945 aa).

Positions 66–76 (PYANGDIHLGH) match the 'HIGH' region motif. L-isoleucyl-5'-AMP is bound at residue glutamate 581. The 'KMSKS' region signature appears at 622-626 (KMSKS). Position 625 (lysine 625) interacts with ATP. Residues cysteine 908, cysteine 911, cysteine 928, and cysteine 931 each coordinate Zn(2+).

This sequence belongs to the class-I aminoacyl-tRNA synthetase family. IleS type 1 subfamily. Monomer. Zn(2+) serves as cofactor.

The protein localises to the cytoplasm. It carries out the reaction tRNA(Ile) + L-isoleucine + ATP = L-isoleucyl-tRNA(Ile) + AMP + diphosphate. Its function is as follows. Catalyzes the attachment of isoleucine to tRNA(Ile). As IleRS can inadvertently accommodate and process structurally similar amino acids such as valine, to avoid such errors it has two additional distinct tRNA(Ile)-dependent editing activities. One activity is designated as 'pretransfer' editing and involves the hydrolysis of activated Val-AMP. The other activity is designated 'posttransfer' editing and involves deacylation of mischarged Val-tRNA(Ile). The chain is Isoleucine--tRNA ligase from Burkholderia ambifaria (strain MC40-6).